A 273-amino-acid chain; its full sequence is Dermonecrotic toxin LhSicTox-alphaIA1iii (273 aa).

The active site involves histidine 5. Mg(2+)-binding residues include glutamate 25 and aspartate 27. Histidine 41 acts as the Nucleophile in catalysis. Intrachain disulfides connect cysteine 45-cysteine 51 and cysteine 47-cysteine 190. Aspartate 85 provides a ligand contact to Mg(2+).

This sequence belongs to the arthropod phospholipase D family. Class II subfamily. Requires Mg(2+) as cofactor. In terms of tissue distribution, expressed by the venom gland.

The protein localises to the secreted. The enzyme catalyses an N-(acyl)-sphingosylphosphocholine = an N-(acyl)-sphingosyl-1,3-cyclic phosphate + choline. It catalyses the reaction an N-(acyl)-sphingosylphosphoethanolamine = an N-(acyl)-sphingosyl-1,3-cyclic phosphate + ethanolamine. It carries out the reaction a 1-acyl-sn-glycero-3-phosphocholine = a 1-acyl-sn-glycero-2,3-cyclic phosphate + choline. The catalysed reaction is a 1-acyl-sn-glycero-3-phosphoethanolamine = a 1-acyl-sn-glycero-2,3-cyclic phosphate + ethanolamine. Functionally, dermonecrotic toxins cleave the phosphodiester linkage between the phosphate and headgroup of certain phospholipids (sphingolipid and lysolipid substrates), forming an alcohol (often choline) and a cyclic phosphate. This toxin acts on sphingomyelin (SM). It may also act on ceramide phosphoethanolamine (CPE), lysophosphatidylcholine (LPC) and lysophosphatidylethanolamine (LPE), but not on lysophosphatidylserine (LPS), and lysophosphatidylglycerol (LPG). It acts by transphosphatidylation, releasing exclusively cyclic phosphate products as second products. Induces dermonecrosis, hemolysis, increased vascular permeability, edema, inflammatory response, and platelet aggregation. This chain is Dermonecrotic toxin LhSicTox-alphaIA1iii, found in Loxosceles hirsuta (Recluse spider).